The following is a 192-amino-acid chain: Imidazoleglycerol-phosphate dehydratase (192 aa).

The protein belongs to the imidazoleglycerol-phosphate dehydratase family.

The protein localises to the cytoplasm. It carries out the reaction D-erythro-1-(imidazol-4-yl)glycerol 3-phosphate = 3-(imidazol-4-yl)-2-oxopropyl phosphate + H2O. Its pathway is amino-acid biosynthesis; L-histidine biosynthesis; L-histidine from 5-phospho-alpha-D-ribose 1-diphosphate: step 6/9. This Staphylococcus epidermidis (strain ATCC 35984 / DSM 28319 / BCRC 17069 / CCUG 31568 / BM 3577 / RP62A) protein is Imidazoleglycerol-phosphate dehydratase.